A 597-amino-acid polypeptide reads, in one-letter code: Kelch-like protein 21 (597 aa).

Residues 35-103 enclose the BTB domain; the sequence is LDVTLEAAGG…SYTGRVAVSG (69 aa). In terms of domain architecture, BACK spans 138–239; the sequence is CLDMQDFAEA…RRFYLLAHVE (102 aa). Kelch repeat units lie at residues 287–335, 336–382, 384–422, 424–463, 464–512, and 513–560; these read ILVL…ALGN, DIYV…VLDG, LYVV…ACRG, LYAI…SFAP, KTVT…VLGG, and KLYV…SIFR. Residues 570 to 597 are disordered; the sequence is GRGFELDGGSSDMDVGQPRPPQNPAELH. Over residues 587–597 the composition is skewed to pro residues; sequence PRPPQNPAELH.

In terms of assembly, component of the BCR(KLHL21) E3 ubiquitin ligase complex, at least composed of CUL3, KLHL21 and RBX1.

It is found in the cytoplasm. The protein localises to the cytoskeleton. The protein resides in the spindle. It participates in protein modification; protein ubiquitination. Functionally, substrate-specific adapter of a BCR (BTB-CUL3-RBX1) E3 ubiquitin-protein ligase complex required for efficient chromosome alignment and cytokinesis. The BCR(KLHL21) E3 ubiquitin ligase complex regulates localization of the chromosomal passenger complex (CPC) from chromosomes to the spindle midzone in anaphase and mediates the ubiquitination of AURKB. Ubiquitination of AURKB by BCR(KLHL21) E3 ubiquitin ligase complex may not lead to its degradation by the proteasome. This chain is Kelch-like protein 21 (KLHL21), found in Bos taurus (Bovine).